We begin with the raw amino-acid sequence, 291 residues long: tRNA-uridine aminocarboxypropyltransferase 1 (291 aa).

The segment at 158 to 181 (KNSAYEPSSKRPKFSPENDKNTYE) is disordered. Residues 171–181 (FSPENDKNTYE) are compositionally biased toward basic and acidic residues. The DXTW motif lies at 199–202 (DSTW).

Belongs to the TDD superfamily. DTWD1 family.

It localises to the nucleus. The enzyme catalyses a uridine in tRNA + S-adenosyl-L-methionine = a 3-[(3S)-3-amino-3-carboxypropyl]uridine in tRNA + S-methyl-5'-thioadenosine + H(+). In terms of biological role, catalyzes the formation of 3-(3-amino-3-carboxypropyl)uridine (acp3U) at position 20 in the D-loop of several cytoplasmic tRNAs (acp3U(20)). The chain is tRNA-uridine aminocarboxypropyltransferase 1 from Xenopus laevis (African clawed frog).